The sequence spans 130 residues: Small ribosomal subunit protein uS11 (130 aa).

Belongs to the universal ribosomal protein uS11 family. As to quaternary structure, part of the 30S ribosomal subunit.

Located on the platform of the 30S subunit. The sequence is that of Small ribosomal subunit protein uS11 from Thermoplasma acidophilum (strain ATCC 25905 / DSM 1728 / JCM 9062 / NBRC 15155 / AMRC-C165).